A 144-amino-acid polypeptide reads, in one-letter code: Large ribosomal subunit protein uL11 (144 aa).

Belongs to the universal ribosomal protein uL11 family. As to quaternary structure, part of the ribosomal stalk of the 50S ribosomal subunit. Interacts with L10 and the large rRNA to form the base of the stalk. L10 forms an elongated spine to which L12 dimers bind in a sequential fashion forming a multimeric L10(L12)X complex. Post-translationally, one or more lysine residues are methylated.

In terms of biological role, forms part of the ribosomal stalk which helps the ribosome interact with GTP-bound translation factors. The sequence is that of Large ribosomal subunit protein uL11 from Neisseria meningitidis serogroup A / serotype 4A (strain DSM 15465 / Z2491).